Consider the following 263-residue polypeptide: Pimeloyl-[acyl-carrier protein] methyl ester esterase (263 aa).

Substrate contacts are provided by residues Trp28, 86-87, and 149-153; these read SL and FLAIQ. Ser86 acts as the Nucleophile in catalysis. Residues Asp213 and His240 contribute to the active site. His240 is a binding site for substrate.

The protein belongs to the AB hydrolase superfamily. Carboxylesterase BioH family. In terms of assembly, monomer.

It is found in the cytoplasm. The enzyme catalyses 6-carboxyhexanoyl-[ACP] methyl ester + H2O = 6-carboxyhexanoyl-[ACP] + methanol + H(+). Its pathway is cofactor biosynthesis; biotin biosynthesis. Functionally, the physiological role of BioH is to remove the methyl group introduced by BioC when the pimeloyl moiety is complete. It allows to synthesize pimeloyl-ACP via the fatty acid synthetic pathway through the hydrolysis of the ester bonds of pimeloyl-ACP esters. The chain is Pimeloyl-[acyl-carrier protein] methyl ester esterase from Shewanella oneidensis (strain ATCC 700550 / JCM 31522 / CIP 106686 / LMG 19005 / NCIMB 14063 / MR-1).